A 146-amino-acid polypeptide reads, in one-letter code: Hemoglobin subunit beta (146 aa).

One can recognise a Globin domain in the interval 2-146 (FLTPEENGHV…VANALAHKYH (145 aa)). T12 is modified (phosphothreonine). A Phosphoserine modification is found at S44. N6-acetyllysine is present on K59. H63 is a heme b binding site. K82 carries the post-translational modification N6-acetyllysine. Position 92 (H92) interacts with heme b. C93 carries the S-nitrosocysteine modification. K144 carries the post-translational modification N6-acetyllysine.

This sequence belongs to the globin family. In terms of assembly, heterotetramer of two alpha chains and two beta chains. In terms of tissue distribution, red blood cells.

Its function is as follows. Involved in oxygen transport from the lung to the various peripheral tissues. This Hapalemur griseus (Gray gentle lemur) protein is Hemoglobin subunit beta (HBB).